We begin with the raw amino-acid sequence, 89 residues long: Elongation factor 1-beta (89 aa).

It belongs to the EF-1-beta/EF-1-delta family.

Functionally, promotes the exchange of GDP for GTP in EF-1-alpha/GDP, thus allowing the regeneration of EF-1-alpha/GTP that could then be used to form the ternary complex EF-1-alpha/GTP/AAtRNA. The protein is Elongation factor 1-beta of Methanosarcina mazei (strain ATCC BAA-159 / DSM 3647 / Goe1 / Go1 / JCM 11833 / OCM 88) (Methanosarcina frisia).